A 473-amino-acid polypeptide reads, in one-letter code: DNA-binding protein (473 aa).

2 disordered regions span residues 1–69 (MAGR…GFSH) and 85–111 (RRLEPKGVPPPSEENNEEEEPSTSKAV). Over residues 7 to 18 (ELPTITPYLQET) the composition is skewed to polar residues. Acidic residues predominate over residues 53–62 (PDSEEEEEEV). The residue at position 141 (Y141) is a Phosphotyrosine; by host. C230 and H232 together coordinate Zn(2+). A flexible loop region spans residues 243 to 277 (VEMDVASENAQRALKEHPSRAKVVQNRWGRSVVQL). Positions 285, 301, 342, 344, 396, and 412 each coordinate Zn(2+). Residues 459-473 (VALPASHGDGEKEPF) are C-terminal arm, DBP binding.

The protein belongs to the adenoviridae E2A DNA-binding protein family. In terms of assembly, homomultimerizes on viral ssDNA bound to pTP. Forms a initiation complex with viral polymerase, pTP and hosts NFIA and POU2F1/OCT1. Interacts with host SRCAP.

Its subcellular location is the host nucleus. Functionally, plays a role in the elongation phase of viral strand displacement replication by unwinding the template in an ATP-independent fashion, employing its capacity to form multimers. Also enhances the rate of initiation. Released from template upon second strand synthesis. Assembles in complex with viral pTP, viral pol, host NFIA and host POU2F1/OCT1 on viral origin of replication. Covers the whole ssDNA genome during synthesis. The complementary strand synthesis induces its relese from DNA template. May inhibit cellular transcription mediated by the interaction between host SRCAP and CBP. The sequence is that of DNA-binding protein from Homo sapiens (Human).